A 97-amino-acid polypeptide reads, in one-letter code: MSNISKETVEKVANLAKLEVSEKEATAFAGQLGKIIELVEQLNTLDTNNVEPTSHAIDVSNVLREDVATKGLDRKEVLKNAPDEQDGMFKVPTIMEQ.

This sequence belongs to the GatC family. As to quaternary structure, heterotrimer of A, B and C subunits.

It catalyses the reaction L-glutamyl-tRNA(Gln) + L-glutamine + ATP + H2O = L-glutaminyl-tRNA(Gln) + L-glutamate + ADP + phosphate + H(+). The catalysed reaction is L-aspartyl-tRNA(Asn) + L-glutamine + ATP + H2O = L-asparaginyl-tRNA(Asn) + L-glutamate + ADP + phosphate + 2 H(+). Functionally, allows the formation of correctly charged Asn-tRNA(Asn) or Gln-tRNA(Gln) through the transamidation of misacylated Asp-tRNA(Asn) or Glu-tRNA(Gln) in organisms which lack either or both of asparaginyl-tRNA or glutaminyl-tRNA synthetases. The reaction takes place in the presence of glutamine and ATP through an activated phospho-Asp-tRNA(Asn) or phospho-Glu-tRNA(Gln). The sequence is that of Aspartyl/glutamyl-tRNA(Asn/Gln) amidotransferase subunit C from Listeria welshimeri serovar 6b (strain ATCC 35897 / DSM 20650 / CCUG 15529 / CIP 8149 / NCTC 11857 / SLCC 5334 / V8).